We begin with the raw amino-acid sequence, 486 residues long: ATP synthase subunit beta (486 aa).

170 to 177 (GGAGVGKT) is a binding site for ATP.

The protein belongs to the ATPase alpha/beta chains family. In terms of assembly, F-type ATPases have 2 components, CF(1) - the catalytic core - and CF(0) - the membrane proton channel. CF(1) has five subunits: alpha(3), beta(3), gamma(1), delta(1), epsilon(1). CF(0) has three main subunits: a(1), b(2) and c(9-12). The alpha and beta chains form an alternating ring which encloses part of the gamma chain. CF(1) is attached to CF(0) by a central stalk formed by the gamma and epsilon chains, while a peripheral stalk is formed by the delta and b chains.

It is found in the cell membrane. It catalyses the reaction ATP + H2O + 4 H(+)(in) = ADP + phosphate + 5 H(+)(out). Its function is as follows. Produces ATP from ADP in the presence of a proton gradient across the membrane. The catalytic sites are hosted primarily by the beta subunits. This chain is ATP synthase subunit beta, found in Clavibacter sepedonicus (Clavibacter michiganensis subsp. sepedonicus).